The following is a 1032-amino-acid chain: Suppression of tumorigenicity 18 protein (1032 aa).

Disordered stretches follow at residues 29–76 (RAEE…TNDH), 162–213 (GRDK…LTYN), and 325–354 (RQPK…AKCP). A compositionally biased stretch (basic residues) spans 40 to 51 (NKRKSLLMKPRH). A compositionally biased stretch (basic and acidic residues) spans 52–76 (YSPDMDCKENPDNRNEDDGLETNDH). 6 CCHHC-type zinc fingers span residues 344–387 (PRPE…PLEI), 388–431 (LAMH…KLAM), 700–743 (RDLK…LKSL), 744–787 (MAAN…GIKM), 792–835 (EEKE…QKEN), and 845–888 (KLNK…IKKV). Cys-353, Cys-358, His-371, Cys-377, Cys-397, Cys-402, His-415, Cys-421, Cys-709, Cys-714, His-727, Cys-733, Cys-753, Cys-758, His-771, Cys-777, Cys-801, Cys-806, His-819, Cys-825, Cys-854, Cys-859, His-872, and Cys-878 together coordinate Zn(2+). Residues 905–974 (IEGDEEIRHL…KELAGLSQAL (70 aa)) adopt a coiled-coil conformation.

The protein belongs to the MYT1 family. In terms of tissue distribution, detected in brain.

It localises to the nucleus. Repressor that binds to DNA sequences containing a bipartite element consisting of a direct repeat of the sequence 5'-AAAGTTT-3' separated by 2-9 nucleotides. Represses basal transcription activity from target promoters. This Rattus norvegicus (Rat) protein is Suppression of tumorigenicity 18 protein (St18).